The primary structure comprises 304 residues: MHIRILGSAAGGGFPQWNCNCRNCRGVRDGSVAAQPRTQSSIALSDDGERWILCNASPDIRAQIAAFPALQPARRPRDTAIGAIVLLDSQIDHTTGLLSLREGCPHEVWCTQMVHQDLSEGFPLFPMLSHWNGGLRHRPIALDGEPFAIPACPRLRFTAIPLRSSAPPYSPHRGDPHPGDNIGLFVEDLDSAGTLFYAPGLGEVDEALLEWMRRADCLLVDGTLWRDDEMLVCEVGDKLGRQMGHLAQSGPGGMLEVLAKVPAARKVLIHINNTNPILDTASAERAELDASGIEVAWDGMHIQL.

Belongs to the PqqB family.

The protein operates within cofactor biosynthesis; pyrroloquinoline quinone biosynthesis. Functionally, may be involved in the transport of PQQ or its precursor to the periplasm. This is Coenzyme PQQ synthesis protein B from Pseudomonas aeruginosa (strain UCBPP-PA14).